Reading from the N-terminus, the 446-residue chain is Tubulin beta-2 chain (446 aa).

GTP contacts are provided by Gln-11, Glu-69, Ser-138, Gly-142, Thr-143, Gly-144, Asn-204, and Asn-226. Glu-69 lines the Mg(2+) pocket. The segment at 424–446 (QYQEATADEEGEFDEDEEGGGDE) is disordered. Over residues 429–446 (TADEEGEFDEDEEGGGDE) the composition is skewed to acidic residues.

This sequence belongs to the tubulin family. As to quaternary structure, dimer of alpha and beta chains. A typical microtubule is a hollow water-filled tube with an outer diameter of 25 nm and an inner diameter of 15 nM. Alpha-beta heterodimers associate head-to-tail to form protofilaments running lengthwise along the microtubule wall with the beta-tubulin subunit facing the microtubule plus end conferring a structural polarity. Microtubules usually have 13 protofilaments but different protofilament numbers can be found in some organisms and specialized cells. Requires Mg(2+) as cofactor. In terms of tissue distribution, testis specific.

The protein resides in the cytoplasm. The protein localises to the cytoskeleton. Tubulin is the major constituent of microtubules, a cylinder consisting of laterally associated linear protofilaments composed of alpha- and beta-tubulin heterodimers. Microtubules grow by the addition of GTP-tubulin dimers to the microtubule end, where a stabilizing cap forms. Below the cap, tubulin dimers are in GDP-bound state, owing to GTPase activity of alpha-tubulin. This is Tubulin beta-2 chain (betaTub85D) from Drosophila melanogaster (Fruit fly).